A 630-amino-acid polypeptide reads, in one-letter code: GTPase-activating protein NEL1 (630 aa).

Belongs to the SEC23/SEC24 family. SEC23 subfamily.

The protein resides in the cytoplasm. Its subcellular location is the nucleus. Its function is as follows. Acts as a GTPase-activating protein (GAP) for SAR1. Contrary to its SEC23 homolog, NEL1 does not associate with SEC24 and its homologs, nor does it associate with the COPII components, suggesting that it is unlikely that NEL1 functions as a structural component of the vesicle coat machinery. May function as a signaling molecule. The polypeptide is GTPase-activating protein NEL1 (Saccharomyces cerevisiae (strain ATCC 204508 / S288c) (Baker's yeast)).